The sequence spans 134 residues: Cytochrome b (134 aa).

Helical transmembrane passes span 33-53 (FGSL…FLAM), 77-98 (WLIR…FLHV), and 113-133 (WNMG…GYVL). Histidine 83 and histidine 97 together coordinate heme b.

The protein belongs to the cytochrome b family. The cytochrome bc1 complex contains 11 subunits: 3 respiratory subunits (MT-CYB, CYC1 and UQCRFS1), 2 core proteins (UQCRC1 and UQCRC2) and 6 low-molecular weight proteins (UQCRH/QCR6, UQCRB/QCR7, UQCRQ/QCR8, UQCR10/QCR9, UQCR11/QCR10 and a cleavage product of UQCRFS1). This cytochrome bc1 complex then forms a dimer. Heme b is required as a cofactor.

It localises to the mitochondrion inner membrane. In terms of biological role, component of the ubiquinol-cytochrome c reductase complex (complex III or cytochrome b-c1 complex) that is part of the mitochondrial respiratory chain. The b-c1 complex mediates electron transfer from ubiquinol to cytochrome c. Contributes to the generation of a proton gradient across the mitochondrial membrane that is then used for ATP synthesis. In Microtus subterraneus (European pine vole), this protein is Cytochrome b (MT-CYB).